The chain runs to 445 residues: Ribulose bisphosphate carboxylase large chain (445 aa).

Substrate is bound by residues Asn89 and Thr139. The active-site Proton acceptor is Lys141. Residue Lys143 participates in substrate binding. Residues Lys167, Asp169, and Glu170 each coordinate Mg(2+). Lys167 carries the N6-carboxylysine modification. The Proton acceptor role is filled by His260. Residues Arg261, His293, and Ser345 each coordinate substrate.

It belongs to the RuBisCO large chain family. Type I subfamily. As to quaternary structure, heterohexadecamer of 8 large chains and 8 small chains; disulfide-linked. The disulfide link is formed within the large subunit homodimers. It depends on Mg(2+) as a cofactor. In terms of processing, the disulfide bond which can form in the large chain dimeric partners within the hexadecamer appears to be associated with oxidative stress and protein turnover.

The protein localises to the plastid. It localises to the chloroplast. The catalysed reaction is 2 (2R)-3-phosphoglycerate + 2 H(+) = D-ribulose 1,5-bisphosphate + CO2 + H2O. The enzyme catalyses D-ribulose 1,5-bisphosphate + O2 = 2-phosphoglycolate + (2R)-3-phosphoglycerate + 2 H(+). In terms of biological role, ruBisCO catalyzes two reactions: the carboxylation of D-ribulose 1,5-bisphosphate, the primary event in carbon dioxide fixation, as well as the oxidative fragmentation of the pentose substrate in the photorespiration process. Both reactions occur simultaneously and in competition at the same active site. The sequence is that of Ribulose bisphosphate carboxylase large chain from Callicarpa dichotoma (Purple beautyberry).